Reading from the N-terminus, the 138-residue chain is MAELQQLRVQEAVDSMVKSLERENIRKMQGLMFRCSAACCEESQASMQQVHQCIERCHAPLAQAQALVTSELEKFQDRLARCTMYCNDKAKDSIDAGSKELHVKRQLETCVTKCVDDHMNLIPTMTRKMKESLSSIGK.

Alanine 2 carries the N-acetylalanine modification. 2 positions are modified to phosphothreonine: threonine 124 and threonine 126.

Belongs to the FAM136 family.

In Bos taurus (Bovine), this protein is Protein FAM136A (FAM136A).